We begin with the raw amino-acid sequence, 373 residues long: Chorismate synthase (373 aa).

NADP(+) contacts are provided by arginine 48 and arginine 54. FMN contacts are provided by residues 125–127 (RSS), 248–249 (NA), glycine 288, 303–307 (KPTSS), and arginine 329.

The protein belongs to the chorismate synthase family. Homotetramer. The cofactor is FMNH2.

It catalyses the reaction 5-O-(1-carboxyvinyl)-3-phosphoshikimate = chorismate + phosphate. It functions in the pathway metabolic intermediate biosynthesis; chorismate biosynthesis; chorismate from D-erythrose 4-phosphate and phosphoenolpyruvate: step 7/7. Its function is as follows. Catalyzes the anti-1,4-elimination of the C-3 phosphate and the C-6 proR hydrogen from 5-enolpyruvylshikimate-3-phosphate (EPSP) to yield chorismate, which is the branch point compound that serves as the starting substrate for the three terminal pathways of aromatic amino acid biosynthesis. This reaction introduces a second double bond into the aromatic ring system. This Colwellia psychrerythraea (strain 34H / ATCC BAA-681) (Vibrio psychroerythus) protein is Chorismate synthase.